A 158-amino-acid chain; its full sequence is Transcription elongation factor GreA (158 aa).

The protein belongs to the GreA/GreB family.

Functionally, necessary for efficient RNA polymerase transcription elongation past template-encoded arresting sites. The arresting sites in DNA have the property of trapping a certain fraction of elongating RNA polymerases that pass through, resulting in locked ternary complexes. Cleavage of the nascent transcript by cleavage factors such as GreA or GreB allows the resumption of elongation from the new 3'terminus. GreA releases sequences of 2 to 3 nucleotides. This chain is Transcription elongation factor GreA, found in Salmonella typhi.